We begin with the raw amino-acid sequence, 524 residues long: Peptide chain release factor 3 (524 aa).

The tr-type G domain occupies 11 to 278 (AKRRTFAIIS…SFVQYAPEPG (268 aa)). Residues 20 to 27 (SHPDAGKT), 88 to 92 (DTPGH), and 142 to 145 (NKLD) contribute to the GTP site.

Belongs to the TRAFAC class translation factor GTPase superfamily. Classic translation factor GTPase family. PrfC subfamily.

The protein resides in the cytoplasm. Its function is as follows. Increases the formation of ribosomal termination complexes and stimulates activities of RF-1 and RF-2. It binds guanine nucleotides and has strong preference for UGA stop codons. It may interact directly with the ribosome. The stimulation of RF-1 and RF-2 is significantly reduced by GTP and GDP, but not by GMP. The polypeptide is Peptide chain release factor 3 (Lacticaseibacillus paracasei (strain ATCC 334 / BCRC 17002 / CCUG 31169 / CIP 107868 / KCTC 3260 / NRRL B-441) (Lactobacillus paracasei)).